Consider the following 154-residue polypeptide: Lipoprotein signal peptidase (154 aa).

The next 2 membrane-spanning stretches (helical) occupy residues 55-75 (GHMW…IYIM) and 84-104 (LFSI…IDRI). Active-site residues include Asp-111 and Asp-129. Residues 124–144 (IFNVADAALSVGVVLMLVYVF) traverse the membrane as a helical segment.

This sequence belongs to the peptidase A8 family.

It localises to the cell membrane. The catalysed reaction is Release of signal peptides from bacterial membrane prolipoproteins. Hydrolyzes -Xaa-Yaa-Zaa-|-(S,diacylglyceryl)Cys-, in which Xaa is hydrophobic (preferably Leu), and Yaa (Ala or Ser) and Zaa (Gly or Ala) have small, neutral side chains.. It functions in the pathway protein modification; lipoprotein biosynthesis (signal peptide cleavage). Its function is as follows. This protein specifically catalyzes the removal of signal peptides from prolipoproteins. The polypeptide is Lipoprotein signal peptidase (Listeria innocua serovar 6a (strain ATCC BAA-680 / CLIP 11262)).